The primary structure comprises 161 residues: Regulator of ribonuclease activity A (161 aa).

The protein belongs to the RraA family. As to quaternary structure, homotrimer. Binds to both RNA-binding sites in the C-terminal region of Rne and to RhlB.

Its subcellular location is the cytoplasm. Functionally, globally modulates RNA abundance by binding to RNase E (Rne) and regulating its endonucleolytic activity. Can modulate Rne action in a substrate-dependent manner by altering the composition of the degradosome. Modulates RNA-binding and helicase activities of the degradosome. This is Regulator of ribonuclease activity A from Citrobacter koseri (strain ATCC BAA-895 / CDC 4225-83 / SGSC4696).